The chain runs to 135 residues: Small ribosomal subunit protein uS11 (135 aa).

The protein belongs to the universal ribosomal protein uS11 family. In terms of assembly, part of the 30S ribosomal subunit. Interacts with proteins S7 and S18. Binds to IF-3.

Its function is as follows. Located on the platform of the 30S subunit, it bridges several disparate RNA helices of the 16S rRNA. Forms part of the Shine-Dalgarno cleft in the 70S ribosome. The chain is Small ribosomal subunit protein uS11 from Solibacter usitatus (strain Ellin6076).